Here is a 286-residue protein sequence, read N- to C-terminus: Polyamine aminopropyltransferase 1 (286 aa).

The PABS domain maps to 1–235 (MSDYQETLYQ…GAMTFAWGST (235 aa)). Residue glutamine 30 coordinates S-methyl-5'-thioadenosine. Residues histidine 61 and aspartate 85 each contribute to the spermidine site. S-methyl-5'-thioadenosine-binding positions include glutamate 105 and 137–138 (DG). Residue aspartate 155 is the Proton acceptor of the active site. 155 to 158 (DSTD) is a binding site for spermidine. Proline 162 is a binding site for S-methyl-5'-thioadenosine.

It belongs to the spermidine/spermine synthase family. As to quaternary structure, homodimer or homotetramer.

The protein localises to the cytoplasm. The catalysed reaction is S-adenosyl 3-(methylsulfanyl)propylamine + putrescine = S-methyl-5'-thioadenosine + spermidine + H(+). It participates in amine and polyamine biosynthesis; spermidine biosynthesis; spermidine from putrescine: step 1/1. In terms of biological role, catalyzes the irreversible transfer of a propylamine group from the amino donor S-adenosylmethioninamine (decarboxy-AdoMet) to putrescine (1,4-diaminobutane) to yield spermidine. In Pseudomonas aeruginosa (strain ATCC 15692 / DSM 22644 / CIP 104116 / JCM 14847 / LMG 12228 / 1C / PRS 101 / PAO1), this protein is Polyamine aminopropyltransferase 1.